Consider the following 551-residue polypeptide: Rqc2 homolog RqcH (551 aa).

The protein belongs to the NEMF family. In terms of assembly, associates with stalled 50S ribosomal subunits, binds to RqcP. Interacts with human fibronectin.

Its subcellular location is the secreted. It is found in the capsule. The protein localises to the cell surface. It localises to the cytoplasm. Its function is as follows. Key component of the ribosome quality control system (RQC), a ribosome-associated complex that mediates the extraction of incompletely synthesized nascent chains from stalled ribosomes and their subsequent degradation. RqcH recruits Ala-charged tRNA, and with RqcP directs the elongation of stalled nascent chains on 50S ribosomal subunits, leading to non-templated C-terminal alanine extensions (Ala tail). The Ala tail promotes nascent chain degradation. May add between 1 and at least 8 Ala residues. Binds to stalled 50S ribosomal subunits. Functionally, plays a significant role in virulence. Recombinant protein binds to immobilized human fibronectin; binding is saturable and competed by heparin. Purified protein inhibits binding of whole cells to fibronectin. This Streptococcus pneumoniae serotype 2 (strain D39 / NCTC 7466) protein is Rqc2 homolog RqcH.